A 395-amino-acid chain; its full sequence is Elongation factor Ts, mitochondrial (395 aa).

The N-terminal 63 residues, 1 to 63 (MAFARAVRRP…RGFGNFIRSF (63 aa)), are a transit peptide targeting the mitochondrion.

Belongs to the EF-Ts family.

It localises to the mitochondrion. In terms of biological role, associates with the EF-Tu.GDP complex and induces the exchange of GDP to GTP. It remains bound to the aminoacyl-tRNA.EF-Tu.GTP complex up to the GTP hydrolysis stage on the ribosome. The sequence is that of Elongation factor Ts, mitochondrial from Arabidopsis thaliana (Mouse-ear cress).